A 543-amino-acid chain; its full sequence is Adenosine deaminase 2 (543 aa).

Positions 1 to 26 are cleaved as a signal peptide; the sequence is MFLKFKNIFFIVLTLSIVFNGLIVNS. The span at 31–54 shows a compositional bias: low complexity; that stretch reads INNKNNNNNNNNKDLSSSESGSSS. The segment at 31–58 is disordered; sequence INNKNNNNNNNNKDLSSSESGSSSDINP. The N-linked (GlcNAc...) asparagine glycan is linked to N126. H144 and H146 together coordinate Zn(2+). N179 carries N-linked (GlcNAc...) asparagine glycosylation. Residue 232-239 participates in substrate binding; that stretch reads WRKFDGIF. N309 and N326 each carry an N-linked (GlcNAc...) asparagine glycan. Residue G355 participates in substrate binding. H389 is a binding site for Zn(2+). Catalysis depends on E392, which acts as the Proton donor. An N-linked (GlcNAc...) asparagine glycan is attached at N397. The active-site Proton acceptor is H414. Zn(2+) is bound at residue D471. D472 lines the substrate pocket. N508 and N514 each carry an N-linked (GlcNAc...) asparagine glycan.

This sequence belongs to the metallo-dependent hydrolases superfamily. Adenosine and AMP deaminases family. ADGF subfamily. It depends on Zn(2+) as a cofactor.

The protein resides in the secreted. The catalysed reaction is adenosine + H2O + H(+) = inosine + NH4(+). Adenosine deaminase that may contribute to the degradation of extracellular adenosine, a signaling molecule that controls a variety of cellular responses. May play a role in the regulation of cell proliferation. The protein is Adenosine deaminase 2 of Dictyostelium discoideum (Social amoeba).